A 244-amino-acid polypeptide reads, in one-letter code: LexA repressor (244 aa).

Positions 1-24 (MSDSSDTTVDGASDGASDGASGAD) are disordered. Low complexity predominate over residues 10 to 24 (DGASDGASDGASGAD). The segment at residues 58–78 (IREIGDAVGLTSTSSVAHQLR) is a DNA-binding region (H-T-H motif). Catalysis depends on for autocatalytic cleavage activity residues Ser-168 and Lys-205.

It belongs to the peptidase S24 family. As to quaternary structure, homodimer.

The enzyme catalyses Hydrolysis of Ala-|-Gly bond in repressor LexA.. Functionally, represses a number of genes involved in the response to DNA damage (SOS response), including recA and lexA. In the presence of single-stranded DNA, RecA interacts with LexA causing an autocatalytic cleavage which disrupts the DNA-binding part of LexA, leading to derepression of the SOS regulon and eventually DNA repair. The polypeptide is LexA repressor (Mycobacterium marinum (strain ATCC BAA-535 / M)).